Here is an 83-residue protein sequence, read N- to C-terminus: High-potential iron-sulfur protein (83 aa).

Residues cysteine 43, cysteine 46, cysteine 61, and cysteine 75 each coordinate [4Fe-4S] cluster.

This sequence belongs to the high-potential iron-sulfur protein (HiPIP) family. As to quaternary structure, homodimer.

Its function is as follows. Specific class of high-redox-potential 4Fe-4S ferredoxins. Functions in anaerobic electron transport in most purple and in some other photosynthetic bacteria and in at least one genus (Paracoccus) of halophilic, denitrifying bacteria. The chain is High-potential iron-sulfur protein (hip) from Thermochromatium tepidum (Chromatium tepidum).